The sequence spans 474 residues: uncharacterized protein (474 aa).

An N-terminal signal peptide occupies residues 1–23 (MLRRYLTLSFSSLLLLALLFLTG). A lipid anchor (N-palmitoyl cysteine) is attached at Cys-24. The S-diacylglycerol cysteine moiety is linked to residue Cys-24.

Belongs to the MG067/MG068/MG395 family.

The protein localises to the cell membrane. This is an uncharacterized protein from Mycoplasma genitalium (strain ATCC 33530 / DSM 19775 / NCTC 10195 / G37) (Mycoplasmoides genitalium).